The primary structure comprises 292 residues: Chondroitin proteoglycan 3 (292 aa).

Residues 1–17 form the signal peptide; the sequence is MRFVFIIALLLIGASLA. Positions 28-103 are disordered; the sequence is DVSASEDEFS…EGSGDTSPVV (76 aa). Positions 38–80 are enriched in low complexity; it reads GDSSGEISGESSGEASGEASGEASGEASGEASGESSGETSGES. Acidic residues predominate over residues 81 to 96; sequence SGDEETSGEGSGEEGS. N-linked (GlcNAc...) asparagine glycosylation is found at Asn174 and Asn254.

The chain is Chondroitin proteoglycan 3 from Caenorhabditis elegans.